The primary structure comprises 138 residues: Class I hydrophobin 1 (138 aa).

A signal peptide spans Met1–Ala19. 4 disulfides stabilise this stretch: Cys45–Cys113, Cys53–Cys107, Cys54–Cys91, and Cys114–Cys131.

This sequence belongs to the fungal hydrophobin family. As to quaternary structure, interacts with the lipid droplet coating protein Cap20.

The protein localises to the secreted. It is found in the lipid droplet. Functionally, aerial growth, conidiation, and dispersal of filamentous fungi in the environment rely upon a capability of their secreting small amphipathic proteins called hydrophobins (HPBs) with low sequence identity. Class I can self-assemble into an outermost layer of rodlet bundles on aerial cell surfaces, conferring cellular hydrophobicity that supports fungal growth, development and dispersal; whereas Class II form highly ordered films at water-air interfaces through intermolecular interactions but contribute nothing to the rodlet structure. Hydr1 is a class I hydrophobin involved in spore germination, appressorium formation, but not in the formation of the rodlet layer of conidia. Responsible for the full virulence on rubber tree leaves. This is Class I hydrophobin 1 from Colletotrichum siamense (Anthracnose fungus).